The chain runs to 200 residues: Large ribosomal subunit protein uL4 (200 aa).

The interval 38 to 80 (GRQGSKQQKTRSDVSGGGKRPWRQKGTGRARAGTTRGPIWRGG) is disordered.

This sequence belongs to the universal ribosomal protein uL4 family. In terms of assembly, part of the 50S ribosomal subunit.

In terms of biological role, one of the primary rRNA binding proteins, this protein initially binds near the 5'-end of the 23S rRNA. It is important during the early stages of 50S assembly. It makes multiple contacts with different domains of the 23S rRNA in the assembled 50S subunit and ribosome. Functionally, forms part of the polypeptide exit tunnel. This Stutzerimonas stutzeri (strain A1501) (Pseudomonas stutzeri) protein is Large ribosomal subunit protein uL4.